Consider the following 531-residue polypeptide: Probable protein phosphatase 2C 66 (531 aa).

The segment at 1–47 (MGSCLSSDLPPRAGAGAGASPGWPQRWRRRRQRGVERGGAVSGGGGG) is disordered. Residues 10–25 (PPRAGAGAGASPGWPQ) show a composition bias toward low complexity. Positions 88 to 401 (AACLHTQQGR…DDCAVVCLFL (314 aa)) constitute a PPM-type phosphatase domain. Mn(2+)-binding residues include Asp-123 and Gly-124. Residues 151-172 (SANEDTSSHQNGSISGSVNSEE) are compositionally biased toward polar residues. The segment at 151 to 176 (SANEDTSSHQNGSISGSVNSEESPVV) is disordered. 2 residues coordinate Mn(2+): Asp-346 and Asp-392.

Belongs to the PP2C family. Mg(2+) serves as cofactor. It depends on Mn(2+) as a cofactor.

It catalyses the reaction O-phospho-L-seryl-[protein] + H2O = L-seryl-[protein] + phosphate. The enzyme catalyses O-phospho-L-threonyl-[protein] + H2O = L-threonyl-[protein] + phosphate. This chain is Probable protein phosphatase 2C 66, found in Oryza sativa subsp. japonica (Rice).